Consider the following 183-residue polypeptide: ADP-ribosylation factor-like protein 1 (183 aa).

Glycine 2 carries N-myristoyl glycine lipidation. GTP-binding positions include 25-32 (GLDGAGKT), 68-72 (DLGGQ), and 127-130 (NKQD).

It belongs to the small GTPase superfamily. Arf family. Homodimer. Interacts with IMH1 (via GRIP domain); the interaction is dependent on GTP. Interacts with MON2.

Its subcellular location is the golgi apparatus. Functionally, recruits golgins such as IMH1 to the Golgi. Can bind and hydrolyze GTP. May be involved in trafficking events within the endosomal system. In Saccharomyces cerevisiae (strain ATCC 204508 / S288c) (Baker's yeast), this protein is ADP-ribosylation factor-like protein 1 (ARL1).